Here is a 431-residue protein sequence, read N- to C-terminus: Trigger factor (431 aa).

Positions 161–245 (TDIVIGDVQK…VKEIKRMELP (85 aa)) constitute a PPIase FKBP-type domain.

It belongs to the FKBP-type PPIase family. Tig subfamily.

It is found in the cytoplasm. It carries out the reaction [protein]-peptidylproline (omega=180) = [protein]-peptidylproline (omega=0). Functionally, involved in protein export. Acts as a chaperone by maintaining the newly synthesized protein in an open conformation. Functions as a peptidyl-prolyl cis-trans isomerase. The chain is Trigger factor from Chloroherpeton thalassium (strain ATCC 35110 / GB-78).